The primary structure comprises 223 residues: Deoxyribose-phosphate aldolase (223 aa).

Residue aspartate 89 is the Proton donor/acceptor of the active site. Lysine 152 serves as the catalytic Schiff-base intermediate with acetaldehyde. Lysine 181 serves as the catalytic Proton donor/acceptor.

Belongs to the DeoC/FbaB aldolase family. DeoC type 1 subfamily.

The protein localises to the cytoplasm. The enzyme catalyses 2-deoxy-D-ribose 5-phosphate = D-glyceraldehyde 3-phosphate + acetaldehyde. It participates in carbohydrate degradation; 2-deoxy-D-ribose 1-phosphate degradation; D-glyceraldehyde 3-phosphate and acetaldehyde from 2-deoxy-alpha-D-ribose 1-phosphate: step 2/2. Its function is as follows. Catalyzes a reversible aldol reaction between acetaldehyde and D-glyceraldehyde 3-phosphate to generate 2-deoxy-D-ribose 5-phosphate. This is Deoxyribose-phosphate aldolase from Listeria monocytogenes serotype 4a (strain HCC23).